The chain runs to 188 residues: GTPase KRas (188 aa).

GTP contacts are provided by residues 10-18, 29-35, 59-60, and 116-119; these read GAGGVGKSA, VDEYDPT, AG, and NKCD. The short motif at 32–40 is the Effector region element; the sequence is YDPTIEDSY. Residues 168-188 form a disordered region; it reads EKMSKDGKKKKKKTKTKCIIM. C185 carries the post-translational modification Cysteine methyl ester. Residue C185 is the site of S-farnesyl cysteine attachment. Residues 186-188 constitute a propeptide, removed in mature form; that stretch reads IIM.

It belongs to the small GTPase superfamily. Ras family.

Its subcellular location is the cell membrane. It localises to the cytoplasm. The enzyme catalyses GTP + H2O = GDP + phosphate + H(+). With respect to regulation, alternates between an inactive form bound to GDP and an active form bound to GTP. Activated by a guanine nucleotide-exchange factor (GEF) and inactivated by a GTPase-activating protein (GAP). Its function is as follows. Ras proteins bind GDP/GTP and possess intrinsic GTPase activity. Plays an important role in the regulation of cell proliferation. May play a role in promoting oncogenic events by inducing transcriptional silencing of tumor suppressor genes (TSGs). The chain is GTPase KRas (KRAS) from Meleagris gallopavo (Wild turkey).